Reading from the N-terminus, the 670-residue chain is Meiotic sister-chromatid recombination protein 6, mitochondrial (670 aa).

A mitochondrion-targeting transit peptide spans 1-27; the sequence is MLFSRASKIRVSQLMRRLQSTAVGRAA.

It is found in the mitochondrion. Its function is as follows. May be involved in the control of meiotic sister-chromatid recombination. In Eremothecium gossypii (strain ATCC 10895 / CBS 109.51 / FGSC 9923 / NRRL Y-1056) (Yeast), this protein is Meiotic sister-chromatid recombination protein 6, mitochondrial (MSC6).